Consider the following 264-residue polypeptide: Thiazole synthase (264 aa).

The active-site Schiff-base intermediate with DXP is K106. Residues G167, 193–194, and 215–216 each bind 1-deoxy-D-xylulose 5-phosphate; these read AG and NT.

The protein belongs to the ThiG family. As to quaternary structure, homotetramer. Forms heterodimers with either ThiH or ThiS.

The protein resides in the cytoplasm. The catalysed reaction is [ThiS sulfur-carrier protein]-C-terminal-Gly-aminoethanethioate + 2-iminoacetate + 1-deoxy-D-xylulose 5-phosphate = [ThiS sulfur-carrier protein]-C-terminal Gly-Gly + 2-[(2R,5Z)-2-carboxy-4-methylthiazol-5(2H)-ylidene]ethyl phosphate + 2 H2O + H(+). Its pathway is cofactor biosynthesis; thiamine diphosphate biosynthesis. Catalyzes the rearrangement of 1-deoxy-D-xylulose 5-phosphate (DXP) to produce the thiazole phosphate moiety of thiamine. Sulfur is provided by the thiocarboxylate moiety of the carrier protein ThiS. In vitro, sulfur can be provided by H(2)S. This is Thiazole synthase from Xylella fastidiosa (strain Temecula1 / ATCC 700964).